A 453-amino-acid chain; its full sequence is MDQTSIQASGGESATASTLKYMPGFGNDFETESLPGALPQGQNSPQKCNYGLYAEQLSGSPFTAPRGTNERSWLYRIRPSVRHTRRFSNASYPLWKTAPCLDEHSLPLGQLRWDPIPAPEERLTFLEGVRTITTAGDAATQVGMSAHAYVFNQDMVDDYFFNADGELLIVPQLGALRVFTEMGIMDVEPLEICLIPRGMMFKILKTGEQAVWRGYICENYGAKFTLPDRGPIGANCLANPRDFKTPVAAFEDKETPCRVHVKWCGKFYVTEIGHSPLDVVAWHGNYAPFKYDLRTFSPVGAIRFDHPDPSIFSVLTAPTEDAGTANVDFVIFPPRWLVAEHTFRPPWYHRNIMSEFMGLIHGQYDAKEEGFVPGGMSLHNMMLPHGPDALAFEKAANAELKPVKLDHTMAFMFETRYPQQLTKYAAELETLQDDYLECWDGLERKFDGTPGIK.

His306 serves as the catalytic Proton acceptor. The Fe cation site is built by His349 and Glu355. 2 residues coordinate homogentisate: Tyr364 and His385. His385 serves as a coordination point for Fe cation.

Belongs to the homogentisate dioxygenase family. As to quaternary structure, hexamer; dimer of trimers. Fe cation is required as a cofactor.

The catalysed reaction is homogentisate + O2 = 4-maleylacetoacetate + H(+). It functions in the pathway amino-acid degradation; L-phenylalanine degradation; acetoacetate and fumarate from L-phenylalanine: step 4/6. In terms of biological role, involved in the catabolism of homogentisate (2,5-dihydroxyphenylacetate or 2,5-OH-PhAc), a central intermediate in the degradation of phenylalanine and tyrosine. Catalyzes the oxidative ring cleavage of the aromatic ring of homogentisate to yield maleylacetoacetate. The chain is Homogentisate 1,2-dioxygenase from Rhizobium leguminosarum bv. trifolii (strain WSM2304).